A 1865-amino-acid polypeptide reads, in one-letter code: Dedicator of cytokinesis protein 1 (1865 aa).

Residues 9–70 (REEKYGVAFY…PASYIHLKEA (62 aa)) enclose the SH3 domain. Residues 425–609 (RNDIYVTLVQ…DSFQISTLVC (185 aa)) enclose the C2 DOCK-type domain. In terms of domain architecture, DOCKER spans 1207-1617 (YKEIEREEMY…VEKEYGVRIM (411 aa)). 2 disordered regions span residues 1619 to 1716 (SSLD…EFKP) and 1732 to 1865 (TISP…GIVQ). Residues 1639-1666 (PSSSRPLSVASVSSLSSDSTPSRPGSDG) are compositionally biased toward low complexity. Residues 1680–1694 (RSQDKLDKDDLEKEK) are compositionally biased toward basic and acidic residues. Ser-1681 carries the post-translational modification Phosphoserine. A phosphoinositide-binding region spans residues 1687 to 1695 (KDDLEKEKK). The span at 1695 to 1704 (KDKKKEKRNS) shows a compositional bias: basic residues. Positions 1705–1716 (KHQEIFEKEFKP) are enriched in basic and acidic residues. A phosphoserine mark is found at Ser-1743, Ser-1751, Ser-1756, Ser-1761, and Ser-1764. Residues 1756–1766 (SVSPSSPSSQQ) are compositionally biased toward low complexity. 2 positions are modified to phosphothreonine: Thr-1767 and Thr-1772. Positions 1793 to 1819 (ADVADVPPPLPLKGSVADYGNLMENQD) are interaction with NCK2 second and third SH3 domain (minor). The short motif at 1799–1805 (PPPLPLK) is the SH3-binding; interaction with CRK element. The segment at 1820–1836 (LLGSPTPPPPPPHQRHL) is interaction with NCK2 third SH3 domain (major). Pro residues predominate over residues 1824 to 1851 (PTPPPPPPHQRHLPPPLPSKTPPPPPPK). The interaction with NCK2 (minor) stretch occupies residues 1837 to 1852 (PPPLPSKTPPPPPPKT). The SH3-binding; interaction with CRK signature appears at 1838–1843 (PPLPSK). Positions 1855–1865 (KQASVDSGIVQ) are enriched in polar residues. Position 1858 is a phosphoserine (Ser-1858).

Belongs to the DOCK family. In terms of assembly, interacts with the SH3 domains of CRK and NCK2 via multiple sites. Interacts with nucleotide-free RAC1 via its DOCKER domain. Interacts with ELMO1, ELMO2 and probably ELMO3 via its SH3 domain. Interacts with ADGRB1. Identified in a complex with AUTS2 and ELMO2. In terms of tissue distribution, highly expressed in placenta, lung, kidney, pancreas and ovary. Expressed at intermediate level in thymus, testes and colon.

The protein localises to the cytoplasm. The protein resides in the membrane. Its function is as follows. Involved in cytoskeletal rearrangements required for phagocytosis of apoptotic cells and cell motility. Along with DOCK1, mediates CRK/CRKL regulation of epithelial and endothelial cell spreading and migration on type IV collagen. Functions as a guanine nucleotide exchange factor (GEF), which activates Rac Rho small GTPases by exchanging bound GDP for free GTP. Its GEF activity may be enhanced by ELMO1. The polypeptide is Dedicator of cytokinesis protein 1 (DOCK1) (Homo sapiens (Human)).